A 608-amino-acid polypeptide reads, in one-letter code: Granule-bound starch synthase 1, chloroplastic/amyloplastic (608 aa).

A chloroplast-targeting transit peptide spans 1–76; that stretch reads MATITASHFV…EGGMAAGTIV (76 aa). Lys96 lines the ADP-alpha-D-glucose pocket.

Belongs to the glycosyltransferase 1 family. Bacterial/plant glycogen synthase subfamily.

It localises to the plastid. It is found in the chloroplast. Its subcellular location is the amyloplast. It catalyses the reaction an NDP-alpha-D-glucose + [(1-&gt;4)-alpha-D-glucosyl](n) = [(1-&gt;4)-alpha-D-glucosyl](n+1) + a ribonucleoside 5'-diphosphate + H(+). Its pathway is glycan biosynthesis; starch biosynthesis. Its function is as follows. Required for the synthesis of amylose. The polypeptide is Granule-bound starch synthase 1, chloroplastic/amyloplastic (WAXY) (Ipomoea batatas (Sweet potato)).